The following is a 54-amino-acid chain: Preprotein translocase subunit SecG (54 aa).

Over 1-31 (MSSGQNSGGLMSSAGLVRYFDAEDRNSIRID) the chain is Cytoplasmic. A helical membrane pass occupies residues 32–53 (PKTIVAFGVLFGVGVLVLNALA). Residue isoleucine 54 is a topological domain, extracellular.

It belongs to the SEC61-beta family. As to quaternary structure, component of the protein translocase complex. Heterotrimer consisting of alpha (SecY), beta (SecG) and gamma (SecE) subunits. Can form oligomers of the heterotrimer.

The protein localises to the cell membrane. In terms of biological role, involved in protein export. The function of the beta subunit is unknown, but it may be involved in stabilization of the trimeric complex. This Haloquadratum walsbyi (strain DSM 16790 / HBSQ001) protein is Preprotein translocase subunit SecG.